Reading from the N-terminus, the 280-residue chain is uncharacterized protein (280 aa).

CBS domains follow at residues 10-67 (QNKK…GSKY), 90-146 (MEEN…KIDE), 154-209 (ITRD…DWAF), and 229-280 (MKRD…KYFA).

This is an uncharacterized protein from Methanocaldococcus jannaschii (strain ATCC 43067 / DSM 2661 / JAL-1 / JCM 10045 / NBRC 100440) (Methanococcus jannaschii).